A 243-amino-acid polypeptide reads, in one-letter code: DNA repair protein RecO (243 aa).

The protein belongs to the RecO family.

Functionally, involved in DNA repair and RecF pathway recombination. This Bartonella quintana (strain Toulouse) (Rochalimaea quintana) protein is DNA repair protein RecO.